Here is a 368-residue protein sequence, read N- to C-terminus: Phospho-N-acetylmuramoyl-pentapeptide-transferase (368 aa).

The next 9 helical transmembrane spans lie at 2 to 22 (IALI…TPLL), 51 to 71 (TLGG…SALY), 80 to 100 (PSWS…LGFI), 117 to 137 (GGKF…ALLI), 167 to 187 (VAII…TNAV), 193 to 213 (LDGL…IIAF), 234 to 254 (PLDL…FLWY), 271 to 291 (LGGL…AVVL), and 340 to 360 (FWMI…GDWV).

The protein belongs to the glycosyltransferase 4 family. MraY subfamily. It depends on Mg(2+) as a cofactor.

Its subcellular location is the cell membrane. The catalysed reaction is UDP-N-acetyl-alpha-D-muramoyl-L-alanyl-gamma-D-glutamyl-meso-2,6-diaminopimeloyl-D-alanyl-D-alanine + di-trans,octa-cis-undecaprenyl phosphate = di-trans,octa-cis-undecaprenyl diphospho-N-acetyl-alpha-D-muramoyl-L-alanyl-D-glutamyl-meso-2,6-diaminopimeloyl-D-alanyl-D-alanine + UMP. Its pathway is cell wall biogenesis; peptidoglycan biosynthesis. Functionally, catalyzes the initial step of the lipid cycle reactions in the biosynthesis of the cell wall peptidoglycan: transfers peptidoglycan precursor phospho-MurNAc-pentapeptide from UDP-MurNAc-pentapeptide onto the lipid carrier undecaprenyl phosphate, yielding undecaprenyl-pyrophosphoryl-MurNAc-pentapeptide, known as lipid I. The sequence is that of Phospho-N-acetylmuramoyl-pentapeptide-transferase from Bifidobacterium longum (strain DJO10A).